The sequence spans 319 residues: tRNA N6-adenosine threonylcarbamoyltransferase (319 aa).

2 residues coordinate Fe cation: H110 and H114. Substrate is bound by residues 132 to 136 (VVSGG), D165, G178, D182, and N271. D300 serves as a coordination point for Fe cation.

The protein belongs to the KAE1 / TsaD family. It depends on Fe(2+) as a cofactor.

The protein localises to the cytoplasm. The catalysed reaction is L-threonylcarbamoyladenylate + adenosine(37) in tRNA = N(6)-L-threonylcarbamoyladenosine(37) in tRNA + AMP + H(+). Required for the formation of a threonylcarbamoyl group on adenosine at position 37 (t(6)A37) in tRNAs that read codons beginning with adenine. Is involved in the transfer of the threonylcarbamoyl moiety of threonylcarbamoyl-AMP (TC-AMP) to the N6 group of A37, together with TsaE and TsaB. TsaD likely plays a direct catalytic role in this reaction. This Mycoplasma capricolum subsp. capricolum (strain California kid / ATCC 27343 / NCTC 10154) protein is tRNA N6-adenosine threonylcarbamoyltransferase.